The primary structure comprises 348 residues: Competence protein ComGA (348 aa).

145 to 152 (GATGSGKT) contacts ATP.

It belongs to the GSP E family.

It is found in the cell membrane. Required for uptake of DNA by competent cells. In Halalkalibacterium halodurans (strain ATCC BAA-125 / DSM 18197 / FERM 7344 / JCM 9153 / C-125) (Bacillus halodurans), this protein is Competence protein ComGA (comGA).